A 267-amino-acid chain; its full sequence is Apolipoprotein A-I (267 aa).

The N-terminal stretch at 1 to 18 (MKAAVLTLAVLFLTGSQA) is a signal peptide. 2 tandem repeats follow at residues 68-89 (LKLLDNWDSMTSTFSKLREQLG) and 90-111 (PVTQEFWDNLEKETEGLRQEMS). The interval 68–267 (LKLLDNWDSM…EEYTKKLNTQ (200 aa)) is 10 X approximate tandem repeats. Met-110 carries the methionine sulfoxide modification. Residues 112–122 (KDLEEVKAKVQ) form a 3; half-length repeat. 5 tandem repeats follow at residues 123-144 (PYLDDFQKKWQEEMELYRQKVE), 145-166 (PLRAELQEGARQKLHELHEKLS), 167-188 (PLGEEMRDRARAHVDALRTHLA), 189-210 (PYTDELRQRLAARLEALKENGG), and 211-232 (ARLAEYHAKASEHLSTLSEKAK). Met-136 carries the methionine sulfoxide modification. The stretch at 233 to 243 (PALEDLRQGLL) is one 9; half-length repeat. Copy 10 of the repeat occupies 244-267 (PVLESFKVSFLSALEEYTKKLNTQ).

Belongs to the apolipoprotein A1/A4/E family. As to quaternary structure, homodimer. Interacts with APOA1BP and CLU. Component of a sperm activating protein complex (SPAP), consisting of APOA1, an immunoglobulin heavy chain, an immunoglobulin light chain and albumin. Interacts with NDRG1. Interacts with SCGB3A2. Interacts with NAXE and YJEFN3. Glycosylated. Post-translationally, palmitoylated. In terms of tissue distribution, major protein of plasma HDL, also found in chylomicrons.

It localises to the secreted. Its function is as follows. Participates in the reverse transport of cholesterol from tissues to the liver for excretion by promoting cholesterol efflux from tissues and by acting as a cofactor for the lecithin cholesterol acyltransferase (LCAT). As part of the SPAP complex, activates spermatozoa motility. This chain is Apolipoprotein A-I (APOA1), found in Pongo abelii (Sumatran orangutan).